The following is a 457-amino-acid chain: Putative F-box protein At3g58860 (457 aa).

The region spanning 6–54 (MDLFSKLPDEVISHILSSLPTKEAASTSVLAKKWRYLFAFVPSLDFNDS) is the F-box domain.

This Arabidopsis thaliana (Mouse-ear cress) protein is Putative F-box protein At3g58860.